Here is a 434-residue protein sequence, read N- to C-terminus: Pre-B-cell leukemia transcription factor 3 (434 aa).

Residues 20 to 41 are disordered; the sequence is SVQGGMALPPPPHGHEGADGDG. A compositionally biased stretch (basic and acidic residues) spans 32-41; sequence HGHEGADGDG. Residues 41-234 form the PBC domain; that stretch reads GRKQDIGDIL…VMILRSRFLD (194 aa). The segment at 48–127 is PBC-A; sequence DILHQIMTIT…EGVSGPEKGG (80 aa). The PBC-B stretch occupies residues 130–234; the sequence is AAAAAAAAAS…VMILRSRFLD (105 aa). Positions 235–297 form a DNA-binding region, homeobox; TALE-type; it reads ARRKRRNFSK…NKRIRYKKNI (63 aa). Residues 326–341 show a composition bias toward low complexity; the sequence is NQTNSPTTPNSGSSGS. Disordered stretches follow at residues 326–349 and 403–434; these read NQTN…NSGD and LNAN…DTSN. Residues 403–422 show a composition bias toward polar residues; it reads LNANGGWQDATTPSSVTSPT.

This sequence belongs to the TALE/PBX homeobox family. Interacts with PBXIP1. Ubiquitously expressed.

The protein localises to the nucleus. Functionally, transcriptional activator that binds the sequence 5'-ATCAATCAA-3'. In Homo sapiens (Human), this protein is Pre-B-cell leukemia transcription factor 3 (PBX3).